The primary structure comprises 416 residues: Dihydroorotase (416 aa).

Zn(2+)-binding residues include H53 and H55. Substrate is bound by residues 55-57 (HLR) and N87. 4 residues coordinate Zn(2+): D145, H172, H225, and D298. The active site involves D298. H302 contacts substrate.

Belongs to the metallo-dependent hydrolases superfamily. DHOase family. Class I DHOase subfamily. Zn(2+) serves as cofactor.

It catalyses the reaction (S)-dihydroorotate + H2O = N-carbamoyl-L-aspartate + H(+). Its pathway is pyrimidine metabolism; UMP biosynthesis via de novo pathway; (S)-dihydroorotate from bicarbonate: step 3/3. Functionally, catalyzes the reversible cyclization of carbamoyl aspartate to dihydroorotate. This Deinococcus radiodurans (strain ATCC 13939 / DSM 20539 / JCM 16871 / CCUG 27074 / LMG 4051 / NBRC 15346 / NCIMB 9279 / VKM B-1422 / R1) protein is Dihydroorotase.